The following is a 372-amino-acid chain: Protein REVEILLE 7 (372 aa).

In terms of domain architecture, HTH myb-type spans 71–125 (TVTKQREKWSEEEHDRFLEAIKLYGRGWRQIQEHIGTKTAVQIRSHAQKFFSKMA). A DNA-binding region (H-T-H motif) is located at residues 98–121 (WRQIQEHIGTKTAVQIRSHAQKFF). Positions 124–204 (MAQEADSRSE…RCSSPNSCTS (81 aa)) are disordered. Residues 145-155 (RPKRKPAHPYP) are compositionally biased toward basic residues. Residues 156 to 169 (RKSPVPYTQSPPPN) are compositionally biased toward pro residues. Polar residues predominate over residues 178 to 204 (KSPTSVLSSFGSEDQVNRCSSPNSCTS).

It localises to the nucleus. Transcription factor involved in phytochrome A-mediated cotyledon opening. Controlled by the central oscillator mediated by LHY and CCA1. Part of a regulatory circadian feedback loop. Regulates its own expression. The protein is Protein REVEILLE 7 (RVE7) of Arabidopsis thaliana (Mouse-ear cress).